We begin with the raw amino-acid sequence, 424 residues long: Probable serine/threonine-protein kinase PBL6 (424 aa).

The interval 1–26 (MGCFGRTPKSNKRSDTKTTKNNDFTP) is disordered. Glycine 2 is lipidated: N-myristoyl glycine. Cysteine 3 carries S-palmitoyl cysteine lipidation. Position 87 is a phosphothreonine (threonine 87). A Protein kinase domain is found at 98 to 377 (FKSDCFLGEG…VVMALDHLAS (280 aa)). ATP is bound by residues 104–112 (LGEGGFGKV) and lysine 127. Position 172 is a phosphotyrosine (tyrosine 172). Aspartate 225 functions as the Proton acceptor in the catalytic mechanism. 2 positions are modified to phosphoserine: serine 229 and serine 259. Phosphothreonine occurs at positions 260 and 265. Position 273 is a phosphotyrosine (tyrosine 273).

Belongs to the protein kinase superfamily. Ser/Thr protein kinase family.

The protein resides in the cell membrane. It catalyses the reaction L-seryl-[protein] + ATP = O-phospho-L-seryl-[protein] + ADP + H(+). It carries out the reaction L-threonyl-[protein] + ATP = O-phospho-L-threonyl-[protein] + ADP + H(+). Its function is as follows. May be involved in plant defense signaling. The chain is Probable serine/threonine-protein kinase PBL6 from Arabidopsis thaliana (Mouse-ear cress).